A 323-amino-acid chain; its full sequence is Methionyl-tRNA formyltransferase (323 aa).

118 to 121 is a binding site for (6S)-5,6,7,8-tetrahydrofolate; that stretch reads SLLP.

Belongs to the Fmt family.

The catalysed reaction is L-methionyl-tRNA(fMet) + (6R)-10-formyltetrahydrofolate = N-formyl-L-methionyl-tRNA(fMet) + (6S)-5,6,7,8-tetrahydrofolate + H(+). Its function is as follows. Attaches a formyl group to the free amino group of methionyl-tRNA(fMet). The formyl group appears to play a dual role in the initiator identity of N-formylmethionyl-tRNA by promoting its recognition by IF2 and preventing the misappropriation of this tRNA by the elongation apparatus. In Buchnera aphidicola subsp. Baizongia pistaciae (strain Bp), this protein is Methionyl-tRNA formyltransferase.